The chain runs to 284 residues: Elongation factor Ts (284 aa).

Residues 80-83 (TDFV) form an involved in Mg(2+) ion dislocation from EF-Tu region.

It belongs to the EF-Ts family.

The protein localises to the cytoplasm. Associates with the EF-Tu.GDP complex and induces the exchange of GDP to GTP. It remains bound to the aminoacyl-tRNA.EF-Tu.GTP complex up to the GTP hydrolysis stage on the ribosome. The protein is Elongation factor Ts of Neisseria meningitidis serogroup C (strain 053442).